A 167-amino-acid polypeptide reads, in one-letter code: MLPMITEFINYGQQTIRAARYIGQGFMITLSHANRLPVTIQYPYEKLITSERFRGRIHFEFDKCIACEVCVRVCPIDLPVVDWKLETDIRKKRLLNYSIDFGICIFCGNCVEYCPTNCLSMTEEYELSTYDRHELNYNQIALGRLPMSVIDDYTIRTISNLPQIKNE.

2 consecutive 4Fe-4S ferredoxin-type domains span residues 55–84 (GRIH…VDWK) and 95–124 (LNYS…MTEE). [4Fe-4S] cluster-binding residues include cysteine 64, cysteine 67, cysteine 70, cysteine 74, cysteine 104, cysteine 107, cysteine 110, and cysteine 114.

This sequence belongs to the complex I 23 kDa subunit family. As to quaternary structure, NDH is composed of at least 16 different subunits, 5 of which are encoded in the nucleus. [4Fe-4S] cluster serves as cofactor.

It localises to the plastid. Its subcellular location is the chloroplast thylakoid membrane. It catalyses the reaction a plastoquinone + NADH + (n+1) H(+)(in) = a plastoquinol + NAD(+) + n H(+)(out). The enzyme catalyses a plastoquinone + NADPH + (n+1) H(+)(in) = a plastoquinol + NADP(+) + n H(+)(out). NDH shuttles electrons from NAD(P)H:plastoquinone, via FMN and iron-sulfur (Fe-S) centers, to quinones in the photosynthetic chain and possibly in a chloroplast respiratory chain. The immediate electron acceptor for the enzyme in this species is believed to be plastoquinone. Couples the redox reaction to proton translocation, and thus conserves the redox energy in a proton gradient. This chain is NAD(P)H-quinone oxidoreductase subunit I, chloroplastic, found in Atropa belladonna (Belladonna).